Here is a 508-residue protein sequence, read N- to C-terminus: Maturase K (508 aa).

This sequence belongs to the intron maturase 2 family. MatK subfamily.

It is found in the plastid. It localises to the chloroplast. In terms of biological role, usually encoded in the trnK tRNA gene intron. Probably assists in splicing its own and other chloroplast group II introns. The protein is Maturase K of Ranunculus trichophyllus (Whitewater crowfoot).